The chain runs to 339 residues: Replication factor C subunit 5 (339 aa).

59–66 (GPPGTGKT) lines the ATP pocket.

The protein belongs to the activator 1 small subunits family. In terms of assembly, subunit of the RFC complex, an heteropentameric complex consisting of a large subunit RFC1 and four small subunits RFC2, RFC3, RFC4 and RFC5; the RFC complex interacts with PCNA. Forms an heterotetrameric complex with RFC2, RFC3 and RFC4; this complex has ATPase activity but is not stimulated by PCNA. The heterotetramer of subunits RFC2, RFC3, RFC4 and RFC5 interacts with RAD17.

The protein localises to the nucleus. Functionally, subunit of the replication factor C (RFC) complex which acts during elongation of primed DNA templates by DNA polymerases delta and epsilon, and is necessary for ATP-dependent loading of proliferating cell nuclear antigen (PCNA) onto primed DNA. In Mus musculus (Mouse), this protein is Replication factor C subunit 5 (Rfc5).